Reading from the N-terminus, the 254-residue chain is Pyridoxine 5'-phosphate synthase (254 aa).

3-amino-2-oxopropyl phosphate is bound at residue asparagine 12. 14-15 (DH) contributes to the 1-deoxy-D-xylulose 5-phosphate binding site. A 3-amino-2-oxopropyl phosphate-binding site is contributed by arginine 23. The active-site Proton acceptor is the histidine 48. 1-deoxy-D-xylulose 5-phosphate is bound by residues arginine 50 and histidine 55. Glutamate 75 functions as the Proton acceptor in the catalytic mechanism. Threonine 105 provides a ligand contact to 1-deoxy-D-xylulose 5-phosphate. Histidine 199 acts as the Proton donor in catalysis. 3-amino-2-oxopropyl phosphate is bound by residues glycine 200 and 221-222 (GF).

Belongs to the PNP synthase family. In terms of assembly, homooctamer; tetramer of dimers.

Its subcellular location is the cytoplasm. It catalyses the reaction 3-amino-2-oxopropyl phosphate + 1-deoxy-D-xylulose 5-phosphate = pyridoxine 5'-phosphate + phosphate + 2 H2O + H(+). Its pathway is cofactor biosynthesis; pyridoxine 5'-phosphate biosynthesis; pyridoxine 5'-phosphate from D-erythrose 4-phosphate: step 5/5. In terms of biological role, catalyzes the complicated ring closure reaction between the two acyclic compounds 1-deoxy-D-xylulose-5-phosphate (DXP) and 3-amino-2-oxopropyl phosphate (1-amino-acetone-3-phosphate or AAP) to form pyridoxine 5'-phosphate (PNP) and inorganic phosphate. This is Pyridoxine 5'-phosphate synthase from Rhodopseudomonas palustris (strain HaA2).